The sequence spans 258 residues: Tryptophan synthase alpha chain (258 aa).

Catalysis depends on proton acceptor residues E52 and D63.

The protein belongs to the TrpA family. As to quaternary structure, tetramer of two alpha and two beta chains.

The catalysed reaction is (1S,2R)-1-C-(indol-3-yl)glycerol 3-phosphate + L-serine = D-glyceraldehyde 3-phosphate + L-tryptophan + H2O. The protein operates within amino-acid biosynthesis; L-tryptophan biosynthesis; L-tryptophan from chorismate: step 5/5. The alpha subunit is responsible for the aldol cleavage of indoleglycerol phosphate to indole and glyceraldehyde 3-phosphate. The sequence is that of Tryptophan synthase alpha chain from Streptococcus pneumoniae serotype 4 (strain ATCC BAA-334 / TIGR4).